Reading from the N-terminus, the 329-residue chain is Ribosomal protein L11 methyltransferase (329 aa).

Positions 177, 198, 220, and 264 each coordinate S-adenosyl-L-methionine.

This sequence belongs to the methyltransferase superfamily. PrmA family.

It is found in the cytoplasm. It carries out the reaction L-lysyl-[protein] + 3 S-adenosyl-L-methionine = N(6),N(6),N(6)-trimethyl-L-lysyl-[protein] + 3 S-adenosyl-L-homocysteine + 3 H(+). Functionally, methylates ribosomal protein L11. The protein is Ribosomal protein L11 methyltransferase of Helicobacter pylori (strain Shi470).